An 86-amino-acid polypeptide reads, in one-letter code: Acyl carrier protein (86 aa).

The Carrier domain maps to 5–80 (EEILKKVQSI…EAVEFIIDKI (76 aa)). The residue at position 40 (serine 40) is an O-(pantetheine 4'-phosphoryl)serine.

Belongs to the acyl carrier protein (ACP) family. 4'-phosphopantetheine is transferred from CoA to a specific serine of apo-ACP by AcpS. This modification is essential for activity because fatty acids are bound in thioester linkage to the sulfhydryl of the prosthetic group.

Its subcellular location is the plastid. The protein resides in the chloroplast. The protein operates within lipid metabolism; fatty acid biosynthesis. Carrier of the growing fatty acid chain in fatty acid biosynthesis. In Cyanidium caldarium (Red alga), this protein is Acyl carrier protein.